The following is a 99-amino-acid chain: Class II hydrophobin 2 (99 aa).

Residues 1–15 form the signal peptide; the sequence is MKFFVVAALFAGALA. 2 disulfide bridges follow: Cys-30/Cys-79 and Cys-40/Cys-70.

The protein belongs to the cerato-ulmin hydrophobin family. Homotetramer. Further self-assembles to form highly ordered films at water-air interfaces through intermolecular interactions.

It localises to the secreted. The protein localises to the cell wall. In terms of biological role, aerial growth, conidiation, and dispersal of filamentous fungi in the environment rely upon a capability of their secreting small amphipathic proteins called hydrophobins (HPBs) with low sequence identity. Class I can self-assemble into an outermost layer of rodlet bundles on aerial cell surfaces, conferring cellular hydrophobicity that supports fungal growth, development and dispersal; whereas Class II form highly ordered films at water-air interfaces through intermolecular interactions but contribute nothing to the rodlet structure. HYD2 is a class II hydrophobin that contributes to the fruiting body development. The chain is Class II hydrophobin 2 from Cordyceps militaris (Caterpillar fungus).